Here is a 132-residue protein sequence, read N- to C-terminus: Ribosome-binding factor A (132 aa).

It belongs to the RbfA family. As to quaternary structure, monomer. Binds 30S ribosomal subunits, but not 50S ribosomal subunits or 70S ribosomes.

The protein resides in the cytoplasm. Its function is as follows. One of several proteins that assist in the late maturation steps of the functional core of the 30S ribosomal subunit. Associates with free 30S ribosomal subunits (but not with 30S subunits that are part of 70S ribosomes or polysomes). Required for efficient processing of 16S rRNA. May interact with the 5'-terminal helix region of 16S rRNA. This Pectobacterium atrosepticum (strain SCRI 1043 / ATCC BAA-672) (Erwinia carotovora subsp. atroseptica) protein is Ribosome-binding factor A.